Here is a 154-residue protein sequence, read N- to C-terminus: MGETEGKVIAQNKKARHDYFIEETFEAGMVLQGTEIKSIRAGRANLKDSFARVSNGEVYLHNCHISEYEQGNRYNHEPTRARKLLLHKKQIDTLIGQTQQKGYTIVPLKIYIKNGFAKCLIGLGKGKKTFDKRETLRRRDAKREVERALKEKNR.

A disordered region spans residues 134-154 (ETLRRRDAKREVERALKEKNR).

This sequence belongs to the SmpB family.

The protein localises to the cytoplasm. In terms of biological role, required for rescue of stalled ribosomes mediated by trans-translation. Binds to transfer-messenger RNA (tmRNA), required for stable association of tmRNA with ribosomes. tmRNA and SmpB together mimic tRNA shape, replacing the anticodon stem-loop with SmpB. tmRNA is encoded by the ssrA gene; the 2 termini fold to resemble tRNA(Ala) and it encodes a 'tag peptide', a short internal open reading frame. During trans-translation Ala-aminoacylated tmRNA acts like a tRNA, entering the A-site of stalled ribosomes, displacing the stalled mRNA. The ribosome then switches to translate the ORF on the tmRNA; the nascent peptide is terminated with the 'tag peptide' encoded by the tmRNA and targeted for degradation. The ribosome is freed to recommence translation, which seems to be the essential function of trans-translation. The protein is SsrA-binding protein of Halalkalibacterium halodurans (strain ATCC BAA-125 / DSM 18197 / FERM 7344 / JCM 9153 / C-125) (Bacillus halodurans).